Reading from the N-terminus, the 86-residue chain is Large ribosomal subunit protein bL27c (86 aa).

The interval Met-1–Gly-27 is disordered.

It belongs to the bacterial ribosomal protein bL27 family.

The protein resides in the plastid. It localises to the chloroplast. The chain is Large ribosomal subunit protein bL27c from Pyropia yezoensis (Susabi-nori).